Consider the following 143-residue polypeptide: MFLGTYEPRLDDKARLILPAKFRAELAEGLVLTRGQERCLYVFSAEEFARVHEQMRSAPLSSKQARDYIRVFLSGASDEVPDKQGRITIPASLRSYAGLDRELAVIGAGSRAEIWDAAAWQQYLQEKEAAFSETEEEVIPGLF.

SpoVT-AbrB domains are found at residues 5-47 and 76-119; these read TYEP…SAEE and ASDE…DAAA.

This sequence belongs to the MraZ family. As to quaternary structure, forms oligomers.

Its subcellular location is the cytoplasm. The protein localises to the nucleoid. This is Transcriptional regulator MraZ from Kocuria rhizophila (strain ATCC 9341 / DSM 348 / NBRC 103217 / DC2201).